The primary structure comprises 372 residues: Rab9 effector protein with kelch motifs (372 aa).

Kelch repeat units follow at residues 49-95 (KVFI…FIPS), 100-146 (SIWV…TSSA), 151-203 (QLYV…AAGT), 204-250 (KLFI…SAVA), and 254-303 (HLYV…IIPW). The tract at residues 309 to 341 (SEKEDSNSATVNRDAEKGDSTEKGVTQGGDSQE) is disordered. Residues 321 to 330 (RDAEKGDSTE) are compositionally biased toward basic and acidic residues. One copy of the Kelch 6 repeat lies at 349–372 (LCFVFGGMNTEGEIYDDCIVTAVD).

As to quaternary structure, interacts with PIKFYVE; the interaction recruits RABEPK to the endosomal membrane. Interacts with RAB9 in its GTP-bound conformation. Phosphorylated on Ser residues by PIKFYVE.

It localises to the cytoplasm. It is found in the endosome membrane. Rab9 effector required for endosome to trans-Golgi network (TGN) transport. The sequence is that of Rab9 effector protein with kelch motifs (RABEPK) from Bos taurus (Bovine).